Consider the following 548-residue polypeptide: Chaperonin GroEL (548 aa).

ATP contacts are provided by residues 29–32 (TMGP), Lys50, 86–90 (DGTTT), Gly414, 478–480 (NAA), and Asp494.

Belongs to the chaperonin (HSP60) family. As to quaternary structure, forms a cylinder of 14 subunits composed of two heptameric rings stacked back-to-back. Interacts with the co-chaperonin GroES.

Its subcellular location is the cytoplasm. It catalyses the reaction ATP + H2O + a folded polypeptide = ADP + phosphate + an unfolded polypeptide.. Together with its co-chaperonin GroES, plays an essential role in assisting protein folding. The GroEL-GroES system forms a nano-cage that allows encapsulation of the non-native substrate proteins and provides a physical environment optimized to promote and accelerate protein folding. Its function is as follows. May play a protective role against the defense mechanisms generated by the infected macrophages. The polypeptide is Chaperonin GroEL (Legionella pneumophila).